The primary structure comprises 487 residues: Protein nucleotidyltransferase YdiU (487 aa).

The ATP site is built by Gly-91, Gly-93, Arg-94, Lys-114, Asp-126, Gly-127, Arg-177, and Arg-184. The active-site Proton acceptor is the Asp-253. Residues Asn-254 and Asp-263 each contribute to the Mg(2+) site. Asp-263 provides a ligand contact to ATP.

Belongs to the SELO family. It depends on Mg(2+) as a cofactor. Mn(2+) serves as cofactor.

The catalysed reaction is L-seryl-[protein] + ATP = 3-O-(5'-adenylyl)-L-seryl-[protein] + diphosphate. The enzyme catalyses L-threonyl-[protein] + ATP = 3-O-(5'-adenylyl)-L-threonyl-[protein] + diphosphate. It catalyses the reaction L-tyrosyl-[protein] + ATP = O-(5'-adenylyl)-L-tyrosyl-[protein] + diphosphate. It carries out the reaction L-histidyl-[protein] + UTP = N(tele)-(5'-uridylyl)-L-histidyl-[protein] + diphosphate. The catalysed reaction is L-seryl-[protein] + UTP = O-(5'-uridylyl)-L-seryl-[protein] + diphosphate. The enzyme catalyses L-tyrosyl-[protein] + UTP = O-(5'-uridylyl)-L-tyrosyl-[protein] + diphosphate. In terms of biological role, nucleotidyltransferase involved in the post-translational modification of proteins. It can catalyze the addition of adenosine monophosphate (AMP) or uridine monophosphate (UMP) to a protein, resulting in modifications known as AMPylation and UMPylation. In Yersinia pestis (strain Pestoides F), this protein is Protein nucleotidyltransferase YdiU.